A 379-amino-acid chain; its full sequence is Neutral protease 2 homolog TRV_03208 (379 aa).

The N-terminal stretch at 1 to 19 is a signal peptide; sequence MKFFTALAAVGALLAPALA. The propeptide occupies 20 to 187; sequence LPTPASEEAS…DYFSKSLDKR (168 aa). 2 disulfides stabilise this stretch: Cys193–Cys263 and Cys270–Cys288. The N-linked (GlcNAc...) asparagine glycan is linked to Asn221. A Zn(2+)-binding site is contributed by His312. The active site involves Glu313. Residues His316 and Asp327 each contribute to the Zn(2+) site.

This sequence belongs to the peptidase M35 family. It depends on Zn(2+) as a cofactor.

The protein localises to the secreted. It catalyses the reaction Preferential cleavage of bonds with hydrophobic residues in P1'. Also 3-Asn-|-Gln-4 and 8-Gly-|-Ser-9 bonds in insulin B chain.. Its function is as follows. Secreted metalloproteinase that allows assimilation of proteinaceous substrates. Shows high activities on basic nuclear substrates such as histone and protamine. May be involved in virulence. The protein is Neutral protease 2 homolog TRV_03208 of Trichophyton verrucosum (strain HKI 0517).